The primary structure comprises 490 residues: Betaine aldehyde dehydrogenase (490 aa).

Asp-93 lines the K(+) pocket. Gly-150–Trp-152 contributes to the NAD(+) binding site. Catalysis depends on Lys-162, which acts as the Charge relay system. An NAD(+)-binding site is contributed by Lys-176–Glu-179. Residue Val-180 participates in K(+) binding. Gly-230–Ser-233 provides a ligand contact to NAD(+). A K(+)-binding site is contributed by Leu-246. Glu-252 serves as the catalytic Proton acceptor. Residues Gly-254, Cys-286, and Glu-387 each contribute to the NAD(+) site. Catalysis depends on Cys-286, which acts as the Nucleophile. A Cysteine sulfenic acid (-SOH) modification is found at Cys-286. Residues Lys-457 and Gly-460 each coordinate K(+). The active-site Charge relay system is Glu-464.

This sequence belongs to the aldehyde dehydrogenase family. In terms of assembly, dimer of dimers. K(+) is required as a cofactor.

It carries out the reaction betaine aldehyde + NAD(+) + H2O = glycine betaine + NADH + 2 H(+). It functions in the pathway amine and polyamine biosynthesis; betaine biosynthesis via choline pathway; betaine from betaine aldehyde: step 1/1. In terms of biological role, involved in the biosynthesis of the osmoprotectant glycine betaine. Catalyzes the irreversible oxidation of betaine aldehyde to the corresponding acid. The sequence is that of Betaine aldehyde dehydrogenase from Pectobacterium carotovorum subsp. carotovorum (strain PC1).